The chain runs to 138 residues: Cysteine desulfuration protein SufE (138 aa).

Cysteine 51 acts as the Cysteine persulfide intermediate in catalysis.

Belongs to the SufE family. As to quaternary structure, homodimer. Interacts with SufS.

The protein resides in the cytoplasm. It functions in the pathway cofactor biosynthesis; iron-sulfur cluster biosynthesis. In terms of biological role, participates in cysteine desulfuration mediated by SufS. Cysteine desulfuration mobilizes sulfur from L-cysteine to yield L-alanine and constitutes an essential step in sulfur metabolism for biosynthesis of a variety of sulfur-containing biomolecules. Functions as a sulfur acceptor for SufS, by mediating the direct transfer of the sulfur atom from the S-sulfanylcysteine of SufS, an intermediate product of cysteine desulfuration process. The chain is Cysteine desulfuration protein SufE from Shigella sonnei (strain Ss046).